The following is a 254-amino-acid chain: Trypsin 3A1 (254 aa).

The first 20 residues, 1-20, serve as a signal peptide directing secretion; it reads MNQFLFVSFCALLGLSQVSA. Positions 21-27 are cleaved as a propeptide — activation peptide; it reads ATLSSGR. The Peptidase S1 domain occupies 28 to 253; the sequence is IVGGFQIDIA…VRQWIREVSE (226 aa). Residues cysteine 53 and cysteine 69 are joined by a disulfide bond. Catalysis depends on charge relay system residues histidine 68 and aspartate 113. Disulfide bonds link cysteine 178–cysteine 194 and cysteine 205–cysteine 229. Residue serine 209 is the Charge relay system of the active site.

It belongs to the peptidase S1 family. As to expression, midgut.

The protein localises to the secreted. The protein resides in the extracellular space. The enzyme catalyses Preferential cleavage: Arg-|-Xaa, Lys-|-Xaa.. In terms of biological role, major function may be to aid in digestion of the blood meal. The sequence is that of Trypsin 3A1 from Aedes aegypti (Yellowfever mosquito).